The primary structure comprises 616 residues: Probable Xaa-Pro aminopeptidase P (616 aa).

Residues D413, D424, E522, and E536 each contribute to the Mn(2+) site.

It belongs to the peptidase M24B family. Mn(2+) is required as a cofactor.

The enzyme catalyses Release of any N-terminal amino acid, including proline, that is linked to proline, even from a dipeptide or tripeptide.. In terms of biological role, catalyzes the removal of a penultimate prolyl residue from the N-termini of peptides. In Paracoccidioides brasiliensis (strain Pb18), this protein is Probable Xaa-Pro aminopeptidase P (AMPP).